The following is a 226-amino-acid chain: Uracil-DNA glycosylase (226 aa).

The active-site Proton acceptor is the Asp-68.

This sequence belongs to the uracil-DNA glycosylase (UDG) superfamily. UNG family.

The protein resides in the cytoplasm. The enzyme catalyses Hydrolyzes single-stranded DNA or mismatched double-stranded DNA and polynucleotides, releasing free uracil.. Functionally, excises uracil residues from the DNA which can arise as a result of misincorporation of dUMP residues by DNA polymerase or due to deamination of cytosine. This Mycobacteroides abscessus (strain ATCC 19977 / DSM 44196 / CCUG 20993 / CIP 104536 / JCM 13569 / NCTC 13031 / TMC 1543 / L948) (Mycobacterium abscessus) protein is Uracil-DNA glycosylase.